We begin with the raw amino-acid sequence, 160 residues long: RxLR effector protein PexRD44 (160 aa).

The first 21 residues, 1–21 (MRLLLWVLISMLSIALSSCAA), serve as a signal peptide directing secretion. The short motif at 54–76 (RFLRGESSKIVNLKQEEGVFEER) is the RxLR-dEER element.

Belongs to the RxLR effector family.

The protein resides in the secreted. It localises to the host cell membrane. It is found in the host nucleus. The protein localises to the host nucleolus. Effector that is involved in host plant infection. Contributes to virulence during the early infection stage, by inhibiting plant defense responses induced by both PAMP-triggered immunity (PTI) and effector-triggered immunity (ETI). The protein is RxLR effector protein PexRD44 of Phytophthora infestans (strain T30-4) (Potato late blight agent).